The chain runs to 580 residues: Adenine deaminase (580 aa).

The protein belongs to the metallo-dependent hydrolases superfamily. Adenine deaminase family. The cofactor is Mn(2+).

It catalyses the reaction adenine + H2O + H(+) = hypoxanthine + NH4(+). This is Adenine deaminase from Listeria monocytogenes serovar 1/2a (strain ATCC BAA-679 / EGD-e).